The chain runs to 187 residues: Benzene 1,2-dioxygenase subunit beta (187 aa).

This sequence belongs to the bacterial ring-hydroxylating dioxygenase beta subunit family. As to quaternary structure, this dioxygenase system consists of four proteins: the two subunits of the hydroxylase component (BedC1 and BedC2), a ferredoxin (BedB) and a ferredoxin reductase (BedA).

The catalysed reaction is benzene + NADH + O2 + H(+) = cis-1,2-dihydrobenzene-1,2-diol + NAD(+). Its pathway is aromatic compound metabolism; benzene degradation; catechol from benzene: step 1/2. Functionally, the beta subunit may be responsible for the substrate specificity of the enzyme. This Pseudomonas putida (Arthrobacter siderocapsulatus) protein is Benzene 1,2-dioxygenase subunit beta (bedC2).